Here is a 126-residue protein sequence, read N- to C-terminus: MQPYLLLAVGTGGFVGAILRFLISGWVQRLSPTLFPVGTLSVNVLGSFIIGFLALYFESVVAPHQKALVITGMLGALTTFSTFSLETVTMLQGGLWGRVVTNITLNVFLCVVATMLGMMLFKRLYG.

The next 4 helical transmembrane spans lie at 3–23, 37–57, 68–88, and 101–121; these read PYLL…RFLI, VGTL…ALYF, LVIT…LETV, and TNIT…MMLF. The Na(+) site is built by G75 and T78.

The protein belongs to the fluoride channel Fluc/FEX (TC 1.A.43) family.

It localises to the cell inner membrane. The enzyme catalyses fluoride(in) = fluoride(out). Its activity is regulated as follows. Na(+) is not transported, but it plays an essential structural role and its presence is essential for fluoride channel function. Its function is as follows. Fluoride-specific ion channel. Important for reducing fluoride concentration in the cell, thus reducing its toxicity. In Sulfurovum sp. (strain NBC37-1), this protein is Fluoride-specific ion channel FluC.